The following is a 195-amino-acid chain: Replication restart protein PriC (195 aa).

This sequence belongs to the PriC family. Monomer. Component of the replication restart primosome, which is composed of PriA, PriB, PriC, DnaB and DnaT; DnaG primase associates transiently with this complex. Interacts with the C-terminus of SSB; this interaction is required to load the main replicative helicase onto substrate replication forks. Interacts with helicase DnaB alone and in the DnaB-DnaC complex, probably 1:1 binding with DnaB.

Involved in the restart of stalled replication forks, which reloads the DnaB replicative helicase on sites other than the origin of replication. Recognizes abandoned replication forks and remodels DNA single-stranded binding protein (SSB) on ssDNA to uncover a loading site for DnaB. There are several restart pathways, the PriA-PriC pathway is a minor restart pathway. Part of the minor PriC-Rep pathway for restart of stalled replication forks, which has a different substrate specificity than PriA. Part of the major restart pathway with PriA, PriB, DnaB, DnaT and DnaG primase. priB and priC have redundant roles in the cell. The protein is Replication restart protein PriC of Haemophilus influenzae (strain ATCC 51907 / DSM 11121 / KW20 / Rd).